The chain runs to 416 residues: MRAALLTLAFTALAAAADDATTTVGFFGGGEWENSNDDDSLPLIPSYTSIGASVVDVNAVETVLAISCLEGAATESCSINDPWTMTQGISSFSWYAEYTAFDWNPPVTATLDYNCAYENYTLSATCTYSMSYSGSSDGAETSTSFSTETSWDSVATYAALEVTGGLDKFNQPEATETPEGGAGFAGPIQAMVTAAPVLAAGLLASHASGAWRKGKILLIKPFKGILPRLARLEASVKSPNPYRNEPLTPNLDIRAPSSGQCNASLYTRHHPGCFDDDIDSLGQVVLSSQVLGVFFNRLCRVEFVCPDAQFACRECQPVFVDIHCNDVPSTKLPCCRGRKQTNRPCPKNKHILAWLELCKAEAMHRDSKGLKDNAFVKPYVVGELVAEVPRQAEKGRQRAMDNIARSRNCGKGHVRT.

A signal peptide spans 1–16 (MRAALLTLAFTALAAA). Asn-119 and Asn-262 each carry an N-linked (GlcNAc...) asparagine glycan.

Part of the gene cluster that mediates the biosynthesis of notoamide, a fungal indole alkaloid that belongs to a family of natural products containing a characteristic bicyclo[2.2.2]diazaoctane core. The first step of notoamide biosynthesis involves coupling of L-proline and L-tryptophan by the bimodular NRPS notE', to produce cyclo-L-tryptophan-L-proline called brevianamide F. The reverse prenyltransferase notF' then acts as a deoxybrevianamide E synthase and converts brevianamide F to deoxybrevianamide E via reverse prenylation at C-2 of the indole ring leading to the bicyclo[2.2.2]diazaoctane core. Deoxybrevianamide E is further hydroxylated at C-6 of the indole ring, likely catalyzed by the cytochrome P450 monooxygenase notG', to yield 6-hydroxy-deoxybrevianamide E. 6-hydroxy-deoxybrevianamide E is a specific substrate of the prenyltransferase notC' for normal prenylation at C-7 to produce 6-hydroxy-7-prenyl-deoxybrevianamide, also called notoamide S. As the proposed pivotal branching point in notoamide biosynthesis, notoamide S can be diverted to notoamide E through an oxidative pyran ring closure putatively catalyzed by either notH' cytochrome P450 monooxygenase or the notD' FAD-linked oxidoreductase. This step would be followed by an indole 2,3-epoxidation-initiated pinacol-like rearrangement catalyzed by the notB' FAD-dependent monooxygenase leading to the formation of notoamide C and notoamide D. On the other hand notoamide S is converted to notoamide T by notH' (or notD'), a bifunctional oxidase that also functions as the intramolecular Diels-Alderase responsible for generation of (-)-notoamide T. To generate antipodal (+)-notoaminide T, notH (or notD) in Aspergillus strain MF297-2 is expected to catalyze a Diels-Alder reaction leading to the opposite stereochemistry. The remaining oxidoreductase notD' (or notH') likely catalyzes the oxidative pyran ring formation to yield (-)-stephacidin A. The FAD-dependent monooxygenase notI' is highly similar to notB' and is predicted to catalyze a similar conversion from (-)-stephacidin A to (+)-notoamide B via the 2,3-epoxidation of (-)-stephacidin A followed by a pinacol-type rearrangement. Finally, it remains unclear which enzyme could be responsible for the final hydroxylation steps leading to notoamide A and sclerotiamide. The function of notN' in the notoamide biosynthesis has not been determined yet. The protein is Notoamide biosynthesis cluster protein N' of Aspergillus versicolor.